Here is a 224-residue protein sequence, read N- to C-terminus: MKQQDAALVCFSGGQDSTTCLFWAKKHFSRVEAVCFTYGQKHSLEIEVARKIAADADVPFQLLDVSLISQLDPNCSLTNASIEMDQEKPEDSYPNTFVPGRNMVFLTFAAILARGKGIYHLVTGVSEADYSGYPDCRDTFVRSLNVTLNLAMDEQFVIHTPLMDRDKSEVWELSDELGVFDLVRTQTLTCYNGVMAEGCGHCPACKLRKDGLEKYLKRKEENQK.

F11–L21 lines the ATP pocket. The Zn(2+) site is built by C190, C199, C202, and C205.

The protein belongs to the QueC family. Zn(2+) is required as a cofactor.

It catalyses the reaction 7-carboxy-7-deazaguanine + NH4(+) + ATP = 7-cyano-7-deazaguanine + ADP + phosphate + H2O + H(+). It functions in the pathway purine metabolism; 7-cyano-7-deazaguanine biosynthesis. Catalyzes the ATP-dependent conversion of 7-carboxy-7-deazaguanine (CDG) to 7-cyano-7-deazaguanine (preQ(0)). The chain is 7-cyano-7-deazaguanine synthase from Parabacteroides distasonis (strain ATCC 8503 / DSM 20701 / CIP 104284 / JCM 5825 / NCTC 11152).